A 1177-amino-acid polypeptide reads, in one-letter code: DNA-directed RNA polymerase subunit beta (1177 aa).

Residues 1-36 (MEGCILADSRQSKTAASPSPSRPQSSSNNSVPGAPN) are disordered. A compositionally biased stretch (low complexity) spans 17–32 (SPSPSRPQSSSNNSVP).

The protein belongs to the RNA polymerase beta chain family. As to quaternary structure, the RNAP catalytic core consists of 2 alpha, 1 beta, 1 beta' and 1 omega subunit. When a sigma factor is associated with the core the holoenzyme is formed, which can initiate transcription.

The enzyme catalyses RNA(n) + a ribonucleoside 5'-triphosphate = RNA(n+1) + diphosphate. DNA-dependent RNA polymerase catalyzes the transcription of DNA into RNA using the four ribonucleoside triphosphates as substrates. This is DNA-directed RNA polymerase subunit beta from Mycobacterium tuberculosis (strain ATCC 25177 / H37Ra).